The following is a 313-amino-acid chain: Protein YABBY 3 (313 aa).

Residues 65 to 92 (CHYCDTVLVVSVPSSSLFETVTVRCGHC) form a C4-type zinc finger. Disordered stretches follow at residues 107 to 149 (TTAA…SLLD) and 180 to 221 (NNSP…KRQR). A compositionally biased stretch (pro residues) spans 112-128 (APPPPPPPPPPPPPPAA).

It belongs to the YABBY family. In terms of tissue distribution, expressed in shoot apex and young inflorescences.

It is found in the nucleus. The sequence is that of Protein YABBY 3 (YAB3) from Oryza sativa subsp. japonica (Rice).